A 344-amino-acid polypeptide reads, in one-letter code: N-acetyl-gamma-glutamyl-phosphate reductase (344 aa).

Cysteine 149 is a catalytic residue.

The protein belongs to the NAGSA dehydrogenase family. Type 1 subfamily.

The protein resides in the cytoplasm. The catalysed reaction is N-acetyl-L-glutamate 5-semialdehyde + phosphate + NADP(+) = N-acetyl-L-glutamyl 5-phosphate + NADPH + H(+). The protein operates within amino-acid biosynthesis; L-arginine biosynthesis; N(2)-acetyl-L-ornithine from L-glutamate: step 3/4. Functionally, catalyzes the NADPH-dependent reduction of N-acetyl-5-glutamyl phosphate to yield N-acetyl-L-glutamate 5-semialdehyde. The sequence is that of N-acetyl-gamma-glutamyl-phosphate reductase from Thermoanaerobacter sp. (strain X514).